Here is a 469-residue protein sequence, read N- to C-terminus: GTPase Der (469 aa).

EngA-type G domains follow at residues 3 to 167 and 176 to 349; these read PTLV…PEEE and PKIA…AAAF. GTP is bound by residues 9 to 16, 56 to 60, 119 to 122, 182 to 189, 229 to 233, and 294 to 297; these read GRPNVGKS, DTGGL, NKAE, DTAGV, and NKWD. The region spanning 350–436 is the KH-like domain; the sequence is IKLSTPKLTR…RIQIKEDEGK (87 aa). A compositionally biased stretch (basic and acidic residues) spans 432 to 443; the sequence is EDEGKNPFEGKK. The interval 432 to 469 is disordered; the sequence is EDEGKNPFEGKKRAPLSESEATRMRRKKRVRRKVYGAD. Residues 455–469 are compositionally biased toward basic residues; that stretch reads MRRKKRVRRKVYGAD.

This sequence belongs to the TRAFAC class TrmE-Era-EngA-EngB-Septin-like GTPase superfamily. EngA (Der) GTPase family. Associates with the 50S ribosomal subunit.

GTPase that plays an essential role in the late steps of ribosome biogenesis. This Thiobacillus denitrificans (strain ATCC 25259 / T1) protein is GTPase Der.